The chain runs to 259 residues: Bidirectional sugar transporter SWEET4 (259 aa).

Over 1–10 (MVSPDTIRTA) the chain is Extracellular. A MtN3/slv 1 domain is found at 10–94 (AIGVVGNGTA…TYIALFLAFS (85 aa)). Residues 11–31 (IGVVGNGTALVLFLSPVPTFI) form a helical membrane-spanning segment. The Cytoplasmic segment spans residues 32 to 44 (RIWKKGSVEQYSA). A helical membrane pass occupies residues 45 to 65 (VPYVATLLNCMMWVLYGLPAV). Over 66–77 (HPHSMLVITING) the chain is Extracellular. Asn-76 carries N-linked (GlcNAc...) asparagine glycosylation. Residues 78 to 98 (TGMAIELTYIALFLAFSLGAV) traverse the membrane as a helical segment. Residues 99-101 (RRR) are Cytoplasmic-facing. A helical membrane pass occupies residues 102–122 (VLLLLAAEVAFVAAVAALVLN). At 123–131 (LAHTHERRS) the chain is on the extracellular side. Residues 132 to 152 (MIVGILCVLFGTGMYAAPLSV) form a helical membrane-spanning segment. Residues 133–217 (IVGILCVLFG…ILYAIYYKST (85 aa)) enclose the MtN3/slv 2 domain. Topologically, residues 153–165 (MKMVIQTKSVEYM) are cytoplasmic. A helical transmembrane segment spans residues 166–186 (PLFLSLASLVNGICWTAYALI). Residues 187–191 (RFDLY) lie on the Extracellular side of the membrane. A helical membrane pass occupies residues 192-212 (ITIPNGLGVMFAVAQLILYAI). Residues 213–259 (YYKSTQQIIEARKRKEADHVAMTDVVVDSAKNNPSSGAAAAAANGRY) are Cytoplasmic-facing.

The protein belongs to the SWEET sugar transporter family. Forms homooligomers and/or heterooligomers.

It is found in the cell membrane. Mediates both low-affinity uptake and efflux of sugar across the plasma membrane. This Oryza sativa subsp. indica (Rice) protein is Bidirectional sugar transporter SWEET4 (SWEET4).